The following is a 429-amino-acid chain: Glutamate-1-semialdehyde 2,1-aminomutase (429 aa).

At Lys265 the chain carries N6-(pyridoxal phosphate)lysine.

The protein belongs to the class-III pyridoxal-phosphate-dependent aminotransferase family. HemL subfamily. In terms of assembly, homodimer. It depends on pyridoxal 5'-phosphate as a cofactor.

The protein localises to the cytoplasm. It catalyses the reaction (S)-4-amino-5-oxopentanoate = 5-aminolevulinate. It participates in porphyrin-containing compound metabolism; protoporphyrin-IX biosynthesis; 5-aminolevulinate from L-glutamyl-tRNA(Glu): step 2/2. In Legionella pneumophila subsp. pneumophila (strain Philadelphia 1 / ATCC 33152 / DSM 7513), this protein is Glutamate-1-semialdehyde 2,1-aminomutase.